A 481-amino-acid chain; its full sequence is Histidine--tRNA ligase, cytoplasmic (481 aa).

The interval 1–48 (MSEPVVDNVTNKVEKMEVKEKTSAPPKEKKEKKSNKVQLKTPKGTQDY) is disordered. Residues 12-31 (KVEKMEVKEKTSAPPKEKKE) are compositionally biased toward basic and acidic residues.

Belongs to the class-II aminoacyl-tRNA synthetase family.

The protein resides in the cytoplasm. It catalyses the reaction tRNA(His) + L-histidine + ATP = L-histidyl-tRNA(His) + AMP + diphosphate + H(+). The polypeptide is Histidine--tRNA ligase, cytoplasmic (hisS) (Dictyostelium discoideum (Social amoeba)).